The following is a 629-amino-acid chain: tRNA uridine 5-carboxymethylaminomethyl modification enzyme MnmG (629 aa).

FAD is bound by residues 14–19 (GAGHAG), Val126, and Ser181. 273–287 (GPRYCPSIEDKVVRF) lines the NAD(+) pocket. Gln370 is a binding site for FAD.

The protein belongs to the MnmG family. Homodimer. Heterotetramer of two MnmE and two MnmG subunits. The cofactor is FAD.

It is found in the cytoplasm. NAD-binding protein involved in the addition of a carboxymethylaminomethyl (cmnm) group at the wobble position (U34) of certain tRNAs, forming tRNA-cmnm(5)s(2)U34. The sequence is that of tRNA uridine 5-carboxymethylaminomethyl modification enzyme MnmG from Bacillus thuringiensis (strain Al Hakam).